The primary structure comprises 286 residues: Protein FAM87A (286 aa).

2 helical membrane-spanning segments follow: residues 68-88 (YLHSSLFLSILFQVTLLETAL) and 161-181 (SFFVVFQAWSLMILQVLGDML).

The protein belongs to the FAM87 family.

Its subcellular location is the membrane. The protein is Protein FAM87A (FAM87A) of Homo sapiens (Human).